Consider the following 286-residue polypeptide: Beta-lactamase SHV-24 (286 aa).

The first 21 residues, 1-21 (MRYIRLCIISLLATLPLAVHA), serve as a signal peptide directing secretion. The active-site Acyl-ester intermediate is S66. C73 and C119 are joined by a disulfide. Residue E164 is the Proton acceptor of the active site. Residue 230–232 (KTG) participates in substrate binding.

The protein belongs to the class-A beta-lactamase family.

It catalyses the reaction a beta-lactam + H2O = a substituted beta-amino acid. Functionally, hydrolyzes ampicillin. Can also hydrolyze cephaloridine, aztreonam and ceftazidime with a low catalytic rate. In Escherichia coli, this protein is Beta-lactamase SHV-24 (bla).